Reading from the N-terminus, the 231-residue chain is Glycerol-3-phosphate acyltransferase (231 aa).

6 helical membrane-spanning segments follow: residues 6 to 26, 55 to 75, 95 to 115, 130 to 150, 152 to 172, and 196 to 216; these read FLFLFLFFYILGSIPTGLVIG, WGILVFLLDFCKGFVPLTIFL, LTMKISLLAISPILGHMFSLF, IITSFNPLIGISGIIFFAIFL, LFGYASLSSIMASTLVNIFLW, and LFYFSINFATLIIIAKHYSNI.

The protein belongs to the PlsY family. As to quaternary structure, probably interacts with PlsX.

It localises to the cell membrane. The enzyme catalyses an acyl phosphate + sn-glycerol 3-phosphate = a 1-acyl-sn-glycero-3-phosphate + phosphate. It participates in lipid metabolism; phospholipid metabolism. Its function is as follows. Catalyzes the transfer of an acyl group from acyl-phosphate (acyl-PO(4)) to glycerol-3-phosphate (G3P) to form lysophosphatidic acid (LPA). This enzyme utilizes acyl-phosphate as fatty acyl donor, but not acyl-CoA or acyl-ACP. This chain is Glycerol-3-phosphate acyltransferase, found in Aster yellows witches'-broom phytoplasma (strain AYWB).